We begin with the raw amino-acid sequence, 701 residues long: Polyribonucleotide nucleotidyltransferase (701 aa).

Mg(2+) contacts are provided by Asp-485 and Asp-491. One can recognise a KH domain in the interval 552–611 (PRIIKIRINPEKIRDVIGKGGAVIRALTEETGTTIDITDDGTVMIACVNAEGGELAKKRI). Positions 621–689 (GRVYDGTVLK…DKGRLRLSMK (69 aa)) constitute an S1 motif domain.

The protein belongs to the polyribonucleotide nucleotidyltransferase family. Mg(2+) is required as a cofactor.

It localises to the cytoplasm. It catalyses the reaction RNA(n+1) + phosphate = RNA(n) + a ribonucleoside 5'-diphosphate. Its function is as follows. Involved in mRNA degradation. Catalyzes the phosphorolysis of single-stranded polyribonucleotides processively in the 3'- to 5'-direction. The protein is Polyribonucleotide nucleotidyltransferase of Nitrosospira multiformis (strain ATCC 25196 / NCIMB 11849 / C 71).